Consider the following 1484-residue polypeptide: MQRSPLERANLFSKLFFSWTKPILKKGYRQHLELSDIYQIPTADSADNLSEKLEREWDRELASKKNPKLINALRRCFFWRFMFYGLLLYLGEVTKAVQPLLLGRIIASYDPDNAHERSIAYYLGIGLCLLFIVRTLLLHPAVFGLHHIGMQMRIALFSLIYKKTLKLSSRVLDKISTGQLVSLLSNNLNKFDEGLALAHFVWIAPLQVMLLMGLLWDLLQASAFCGLAVLVVLVLFQAWLGHRMMKYRDRRAGKINERLVITAEIIENIQSVKAYCWEEAMENMIESLRETELKLTRKAAYMRYFNSSAFFFSGFFVVFLSVLPSMLTKGIVLRKIFTTISFCIVLRMAVTRQFPWAVQMWYDSIGAIYKIQDFLQKEEYKTLEYNLTTTDVVMENVTAFWDEGFGELLVKAKQNDSSRKVSSDDKNLIFSNISLLGPPVLKDISFKIEKGQLLAVAGSTGAGKTSLLMMIMGELEPLEGKIKHSGRISFSPQFSWIMPGTIKENIVFGVSFDEYRYRSVIKACQLEEEISKFAEKDNTVLGEGGITLSGGQRARISLARAVYKDADLYLLDSPFGYLDVLTEKEIFESCVCKLMANKTRILVTSKMEHLKKADKILILHEGSCYFYGAFSELQNLRPDFSSKLMGYDSFDQFSAERRNSILTETLRRFSLDGDAAGSWNETKKQSFKQTGEFGERRKNSILNPLNSIRKFSLVQKAPLQMNCIDETLDEPPERKLSLVPDSEPGEAILPRSNMLNPGPVLRARRRQSVLNLMTRPSIHQGSSLYKKGSASARKMSVAPQSNMSEMDIYSRRLSKDSGLEISEEINEEDLKECFIDDIESTTSVTTWNTYLRYMTIHKKLIFVLMMCLVIFLIEVAASLVGLCLFKDGASRMNSTSNLNHTSTLDWFAVIVTNTSTYYMFYIYVGVADTLLALGFLRGLPLVHSLISVSKILHQKMLHSVLQAPMSTFNTLKTGSILNRFSKDMAILDDLLPLTIFDFIQLLLIVIGAVTVVSALQPYIFLASVPVVIAFVLLRAYFLRTSQQLKQLESEARSPIFTHLITSLKGLWTLRAFGRQTYFEALFHKALNLHTANWFLYLSTLRWFQMRIEMVFVIFFILVTFISILTTGDGEGKVGIVLTLAMNIMGTLQWAVNASIDVDSLMRSVSRVFKFIDMPTEEHRPTHPAKNKDISGVLIIENQHVKREKNWPSGGQMTVQDLTAKYLDGGPAILDNISFSISSGQRVGLLGRTGSGKSTLLFAFLRLLNTEGDIRIDGISWDAVPVQQWRKAFGVIPQKVFIFSGSFRKNLDPYGQWTDQELWKVAEEVGLKSVIEQFPGQLDFVLIDGGYVLSHGHRQLMCLARSVLSKAKILLLDEPSAHLDPITYQVIRKTLKQAFTNCTVILSEHRIEAMLECQRFLVIEENKVRQYESIQKLLNEKSVFKQAISHSDKMKLFPIHRRNSSKRLSRPKITALQEETEEEVQDTRL.

At 1 to 77 the chain is on the cytoplasmic side; it reads MQRSPLERAN…KLINALRRCF (77 aa). A helical transmembrane segment spans residues 78–98; it reads FWRFMFYGLLLYLGEVTKAVQ. The ABC transmembrane type-1 1 domain occupies 81-365; the sequence is FMFYGLLLYL…WAVQMWYDSI (285 aa). The Extracellular portion of the chain corresponds to 99–122; the sequence is PLLLGRIIASYDPDNAHERSIAYY. A helical membrane pass occupies residues 123–146; sequence LGIGLCLLFIVRTLLLHPAVFGLH. The Cytoplasmic segment spans residues 147–195; the sequence is HIGMQMRIALFSLIYKKTLKLSSRVLDKISTGQLVSLLSNNLNKFDEGL. The chain crosses the membrane as a helical span at residues 196–216; that stretch reads ALAHFVWIAPLQVMLLMGLLW. Residues 217-222 are Extracellular-facing; the sequence is DLLQAS. The helical transmembrane segment at 223-243 threads the bilayer; it reads AFCGLAVLVVLVLFQAWLGHR. The Cytoplasmic portion of the chain corresponds to 244-298; sequence MMKYRDRRAGKINERLVITAEIIENIQSVKAYCWEEAMENMIESLRETELKLTRK. The chain crosses the membrane as a helical span at residues 299 to 319; the sequence is AAYMRYFNSSAFFFSGFFVVF. Residues 320–339 are Extracellular-facing; that stretch reads LSVLPSMLTKGIVLRKIFTT. The chain crosses the membrane as a helical span at residues 340–358; sequence ISFCIVLRMAVTRQFPWAV. Topologically, residues 359–859 are cytoplasmic; sequence QMWYDSIGAI…YLRYMTIHKK (501 aa). Residues W401, S434, 458–465, and Q493 each bind ATP; that span reads GSTGAGKT. The ABC transporter 1 domain occupies 423–646; sequence SDDKNLIFSN…RPDFSSKLMG (224 aa). C524 is lipidated: S-palmitoyl cysteine. A phosphoserine mark is found at S549 and S660. A disordered R region region spans residues 654–832; the sequence is SAERRNSILT…EEINEEDLKE (179 aa). At S670 the chain carries Phosphoserine; by PKA. Position 686 is a phosphoserine (S686). Residue K688 forms a Glycyl lysine isopeptide (Lys-Gly) (interchain with G-Cter in ubiquitin) linkage. S700, S712, S737, S768, S791, S796, and S814 each carry phosphoserine. The helical transmembrane segment at 860-880 threads the bilayer; it reads LIFVLMMCLVIFLIEVAASLV. The ABC transmembrane type-1 2 domain maps to 860-1159; the sequence is LIFVLMMCLV…AVNASIDVDS (300 aa). The Extracellular segment spans residues 881–922; it reads GLCLFKDGASRMNSTSNLNHTSTLDWFAVIVTNTSTYYMFYI. N893, N899, and N913 each carry an N-linked (GlcNAc...) asparagine glycan. A discontinuously helical membrane pass occupies residues 923-943; that stretch reads YVGVADTLLALGFLRGLPLVH. At 944–994 the chain is on the cytoplasmic side; it reads SLISVSKILHQKMLHSVLQAPMSTFNTLKTGSILNRFSKDMAILDDLLPLT. A helical transmembrane segment spans residues 995 to 1015; sequence IFDFIQLLLIVIGAVTVVSAL. Topologically, residues 1016–1017 are extracellular; sequence QP. A helical transmembrane segment spans residues 1018 to 1038; it reads YIFLASVPVVIAFVLLRAYFL. Over 1039–1099 the chain is Cytoplasmic; it reads RTSQQLKQLE…TANWFLYLST (61 aa). A helical transmembrane segment spans residues 1100 to 1120; it reads LRWFQMRIEMVFVIFFILVTF. Topologically, residues 1121 to 1134 are extracellular; it reads ISILTTGDGEGKVG. A helical transmembrane segment spans residues 1135-1155; it reads IVLTLAMNIMGTLQWAVNASI. The Cytoplasmic portion of the chain corresponds to 1156-1484; that stretch reads DVDSLMRSVS…TEEEVQDTRL (329 aa). The ABC transporter 2 domain occupies 1212–1445; that stretch reads MTVQDLTAKY…KSVFKQAISH (234 aa). Residues Y1221 and 1246 to 1253 contribute to the ATP site; that span reads GRTGSGKS. Residues 1388–1484 are interaction with GORASP2; sequence KTLKQAFTNC…TEEEVQDTRL (97 aa). A lipid anchor (S-palmitoyl cysteine) is attached at C1397. Residues S1446 and S1460 each carry the phosphoserine modification. Positions 1463-1484 are disordered; the sequence is LSRPKITALQEETEEEVQDTRL. Residues 1473-1484 show a composition bias toward acidic residues; that stretch reads EETEEEVQDTRL. The PDZ-binding signature appears at 1482–1484; the sequence is TRL.

This sequence belongs to the ABC transporter superfamily. ABCC family. CFTR transporter (TC 3.A.1.202) subfamily. As to quaternary structure, monomer; does not require oligomerization for channel activity. May form oligomers in the membrane. Interacts with SLC26A3, SLC26A6 and NHERF1. Interacts with SHANK2. Interacts with MYO6. Interacts (via C-terminus) with GOPC (via PDZ domain); this promotes CFTR internalization and thereby decreases channel activity. Interacts with SLC4A7 through NHERF1. Found in a complex with MYO5B and RAB11A. Interacts with ANO1. Interacts with SLC26A8. Interacts with AHCYL1; the interaction increases CFTR activity. Interacts with CSE1L. The core-glycosylated form interacts with GORASP2 (via PDZ GRASP-type 1 domain) in respone to ER stress. Interacts with MARCHF2; the interaction leads to CFTR ubiqtuitination and degradation. Interacts with ADGRG2. In terms of processing, N-glycosylated. Phosphorylated; cAMP treatment promotes phosphorylation and activates the channel. Dephosphorylation decreases the ATPase activity (in vitro). Phosphorylation at PKA sites activates the channel. Phosphorylation at PKC sites enhances the response to phosphorylation by PKA. Phosphorylated by AMPK; this inhibits channel activity. Post-translationally, ubiquitinated, leading to its degradation in the lysosome. Deubiquitination by USP10 in early endosomes enhances its endocytic recycling to the cell membrane. Ubiquitinated by RNF185 during ER stress. Ubiquitinated by MARCHF2.

It is found in the apical cell membrane. It localises to the early endosome membrane. Its subcellular location is the cell membrane. The protein resides in the recycling endosome membrane. The protein localises to the endoplasmic reticulum membrane. It is found in the nucleus. The catalysed reaction is ATP + H2O + closed Cl(-) channel = ADP + phosphate + open Cl(-) channel.. It catalyses the reaction chloride(in) = chloride(out). It carries out the reaction hydrogencarbonate(in) = hydrogencarbonate(out). The enzyme catalyses ATP + H2O = ADP + phosphate + H(+). Functionally, epithelial ion channel that plays an important role in the regulation of epithelial ion and water transport and fluid homeostasis. Mediates the transport of chloride ions across the cell membrane. Possesses an intrinsic ATPase activity and utilizes ATP to gate its channel; the passive flow of anions through the channel is gated by cycles of ATP binding and hydrolysis by the ATP-binding domains. The ion channel is also permeable to HCO(3)(-); selectivity depends on the extracellular chloride concentration. Exerts its function also by modulating the activity of other ion channels and transporters. Contributes to the regulation of the pH and the ion content of the epithelial fluid layer. Modulates the activity of the epithelial sodium channel (ENaC) complex, in part by regulating the cell surface expression of the ENaC complex. May regulate bicarbonate secretion and salvage in epithelial cells by regulating the transporter SLC4A7. Can inhibit the chloride channel activity of ANO1. Plays a role in the chloride and bicarbonate homeostasis during sperm epididymal maturation and capacitation. The sequence is that of Cystic fibrosis transmembrane conductance regulator from Ornithorhynchus anatinus (Duckbill platypus).